The sequence spans 130 residues: Holo-[acyl-carrier-protein] synthase (130 aa).

Positions 9 and 58 each coordinate Mg(2+).

Belongs to the P-Pant transferase superfamily. AcpS family. Mg(2+) serves as cofactor.

It localises to the cytoplasm. The enzyme catalyses apo-[ACP] + CoA = holo-[ACP] + adenosine 3',5'-bisphosphate + H(+). In terms of biological role, transfers the 4'-phosphopantetheine moiety from coenzyme A to a Ser of acyl-carrier-protein. The protein is Holo-[acyl-carrier-protein] synthase of Mycobacterium leprae (strain Br4923).